The primary structure comprises 204 residues: Probable nicotinate-nucleotide adenylyltransferase (204 aa).

Belongs to the NadD family.

The enzyme catalyses nicotinate beta-D-ribonucleotide + ATP + H(+) = deamido-NAD(+) + diphosphate. It participates in cofactor biosynthesis; NAD(+) biosynthesis; deamido-NAD(+) from nicotinate D-ribonucleotide: step 1/1. In terms of biological role, catalyzes the reversible adenylation of nicotinate mononucleotide (NaMN) to nicotinic acid adenine dinucleotide (NaAD). This chain is Probable nicotinate-nucleotide adenylyltransferase, found in Dehalococcoides mccartyi (strain ATCC BAA-2266 / KCTC 15142 / 195) (Dehalococcoides ethenogenes (strain 195)).